Consider the following 230-residue polypeptide: Porin OmpL (230 aa).

Residues 1 to 20 (MKNINAIILLSSLTSASVFA) form the signal peptide.

The protein belongs to the oligogalacturonate-specific porin KdgM (TC 1.B.35) family. OmpL subfamily.

It localises to the cell outer membrane. Functionally, outer membrane channel protein that allows an efficient diffusion of low-molecular-weight solutes such as small sugars and tetraglycine. However, the specific substrate recognized by the OmpL channel is unknown. The sequence is that of Porin OmpL (ompL) from Escherichia coli O157:H7.